Here is a 91-residue protein sequence, read N- to C-terminus: Small membrane A-kinase anchor protein (91 aa).

Gly-2 carries N-myristoyl glycine lipidation.

The protein belongs to the small membrane AKAP family. Post-translationally, may be palmitoylated at Cys-3.

Its subcellular location is the cell membrane. Binds to type I regulatory subunits of protein kinase A and may anchor/target them to the plasma membrane. The sequence is that of Small membrane A-kinase anchor protein from Xenopus laevis (African clawed frog).